The sequence spans 729 residues: Ribosomal RNA large subunit methyltransferase K/L (729 aa).

The 112-residue stretch at Thr47–Leu158 folds into the THUMP domain.

It belongs to the methyltransferase superfamily. RlmKL family.

It localises to the cytoplasm. It catalyses the reaction guanosine(2445) in 23S rRNA + S-adenosyl-L-methionine = N(2)-methylguanosine(2445) in 23S rRNA + S-adenosyl-L-homocysteine + H(+). It carries out the reaction guanosine(2069) in 23S rRNA + S-adenosyl-L-methionine = N(2)-methylguanosine(2069) in 23S rRNA + S-adenosyl-L-homocysteine + H(+). Its function is as follows. Specifically methylates the guanine in position 2445 (m2G2445) and the guanine in position 2069 (m7G2069) of 23S rRNA. This chain is Ribosomal RNA large subunit methyltransferase K/L, found in Dichelobacter nodosus (strain VCS1703A).